We begin with the raw amino-acid sequence, 259 residues long: 5'-nucleotidase SurE (259 aa).

A divalent metal cation is bound by residues aspartate 13, aspartate 14, serine 44, and asparagine 101.

The protein belongs to the SurE nucleotidase family. Requires a divalent metal cation as cofactor.

The protein resides in the cytoplasm. The enzyme catalyses a ribonucleoside 5'-phosphate + H2O = a ribonucleoside + phosphate. Nucleotidase that shows phosphatase activity on nucleoside 5'-monophosphates. The sequence is that of 5'-nucleotidase SurE from Flavobacterium johnsoniae (strain ATCC 17061 / DSM 2064 / JCM 8514 / BCRC 14874 / CCUG 350202 / NBRC 14942 / NCIMB 11054 / UW101) (Cytophaga johnsonae).